We begin with the raw amino-acid sequence, 354 residues long: N-acetyl-gamma-glutamyl-phosphate reductase (354 aa).

Cys-156 is a catalytic residue.

Belongs to the NAGSA dehydrogenase family. Type 1 subfamily.

Its subcellular location is the cytoplasm. It catalyses the reaction N-acetyl-L-glutamate 5-semialdehyde + phosphate + NADP(+) = N-acetyl-L-glutamyl 5-phosphate + NADPH + H(+). The protein operates within amino-acid biosynthesis; L-arginine biosynthesis; N(2)-acetyl-L-ornithine from L-glutamate: step 3/4. Its function is as follows. Catalyzes the NADPH-dependent reduction of N-acetyl-5-glutamyl phosphate to yield N-acetyl-L-glutamate 5-semialdehyde. This chain is N-acetyl-gamma-glutamyl-phosphate reductase, found in Bordetella bronchiseptica (strain ATCC BAA-588 / NCTC 13252 / RB50) (Alcaligenes bronchisepticus).